The sequence spans 210 residues: High-affinity nitrate transporter 3.1 (210 aa).

The signal sequence occupies residues 1 to 22; sequence MAIQKILFASLLICSLIQSIHG. A helical transmembrane segment spans residues 178–198; the sequence is LDIASICFSVFSVVALVVFFV.

The protein belongs to the NAR2 family. As to quaternary structure, heterotetramer composed of two NRT2.1 and two NRT3.1. Interacts with NRT2.1 and NRT2.3. Interacts with all other NRT2 transporters, including NRT2.5. In terms of tissue distribution, highly expressed in roots. Detected in shoots.

The protein resides in the cell membrane. Acts as a dual component transporter with NTR2.1. Required for high-affinity nitrate transport. Acts as a repressor of lateral root initiation. May be involved in targeting NRT2 proteins to the plasma membrane. The polypeptide is High-affinity nitrate transporter 3.1 (NRT3.1) (Arabidopsis thaliana (Mouse-ear cress)).